Consider the following 666-residue polypeptide: UvrABC system protein B (666 aa).

Residues 26 to 183 (DSFQKGAEKV…RKLLHIQYNR (158 aa)) enclose the Helicase ATP-binding domain. 39 to 46 (GVTGSGKT) lines the ATP pocket. Residues 92-115 (YYDYYQPEAYVPSSDTFIEKDSSI) carry the Beta-hairpin motif. Residues 429 to 591 (QIEDLLVEIR…ITPLTIRKEV (163 aa)) form the Helicase C-terminal domain. Residues 625–660 (EVLKDKLREEMMKAAKELDFERAAILRDKMLSIQIN) enclose the UVR domain.

It belongs to the UvrB family. Forms a heterotetramer with UvrA during the search for lesions. Interacts with UvrC in an incision complex.

The protein localises to the cytoplasm. Functionally, the UvrABC repair system catalyzes the recognition and processing of DNA lesions. A damage recognition complex composed of 2 UvrA and 2 UvrB subunits scans DNA for abnormalities. Upon binding of the UvrA(2)B(2) complex to a putative damaged site, the DNA wraps around one UvrB monomer. DNA wrap is dependent on ATP binding by UvrB and probably causes local melting of the DNA helix, facilitating insertion of UvrB beta-hairpin between the DNA strands. Then UvrB probes one DNA strand for the presence of a lesion. If a lesion is found the UvrA subunits dissociate and the UvrB-DNA preincision complex is formed. This complex is subsequently bound by UvrC and the second UvrB is released. If no lesion is found, the DNA wraps around the other UvrB subunit that will check the other stand for damage. The protein is UvrABC system protein B of Leptospira borgpetersenii serovar Hardjo-bovis (strain JB197).